The sequence spans 438 residues: UDP-N-acetylmuramoylalanine--D-glutamate ligase (438 aa).

112 to 118 (GSNGKST) serves as a coordination point for ATP.

Belongs to the MurCDEF family.

The protein resides in the cytoplasm. The enzyme catalyses UDP-N-acetyl-alpha-D-muramoyl-L-alanine + D-glutamate + ATP = UDP-N-acetyl-alpha-D-muramoyl-L-alanyl-D-glutamate + ADP + phosphate + H(+). The protein operates within cell wall biogenesis; peptidoglycan biosynthesis. Its function is as follows. Cell wall formation. Catalyzes the addition of glutamate to the nucleotide precursor UDP-N-acetylmuramoyl-L-alanine (UMA). The sequence is that of UDP-N-acetylmuramoylalanine--D-glutamate ligase from Sodalis glossinidius (strain morsitans).